Consider the following 428-residue polypeptide: 5'-nucleotidase domain-containing protein 4 (428 aa).

The active-site Nucleophile is the Asp22. 3 residues coordinate Mg(2+): Asp22, Asp24, and Asp317. Asp24 functions as the Proton donor in the catalytic mechanism.

The protein belongs to the 5'(3')-deoxyribonucleotidase family.

This is 5'-nucleotidase domain-containing protein 4 (NT5DC4) from Homo sapiens (Human).